The following is a 562-amino-acid chain: MKALLRALIGQGIEALRANGTLPGDTLPPDFVVERPKTREHGDFATNAAMLLAKAARSNPRALAQALLTALPDSNDVTKVEIAGPGFINFHLAPTAYQREVAHVIKQGHDYGRGLAGNGRSVGVEYVSANPTGPLHVGHGRAAAIGDSLARVLDANGWNVKREFYYNDAGVQIENLALSVQARAQGLTPDSAGWPENGYRGDYIADVANAYLAGDTVDMEGHLVTGTKDPADLESIRRFAVAYLRNEQNHDLAAFRVDFDIYFLESSLYKDGKVEEAVQKLIASGHTYEEGGALWLKSTDFGDDKDRVMRKSDGTYTYFVPDVAYHLTKWQRGYERAITELGADHHGSLTRVRAGLQAMELGIPQGWPEYVLHQMVTVMRDGEEVKLGKRAGGYVTLRDLIEETSADAVRWFLIARKPDSQLTFDIDLARAQSNDNPVFYVQYAHARVCSVLRQAQEKGYKYDQVHGLAELARLDDEHSLAVMLELSRYPEVVEIAGQTLEPYQIAQYLRELAHAFHTWYHNSKVLVDDAAERDAKLTLAVATQQVLANGLELLGVSAPEKM.

Residues 129 to 139 (ANPTGPLHVGH) carry the 'HIGH' region motif.

The protein belongs to the class-I aminoacyl-tRNA synthetase family. In terms of assembly, monomer.

The protein localises to the cytoplasm. The catalysed reaction is tRNA(Arg) + L-arginine + ATP = L-arginyl-tRNA(Arg) + AMP + diphosphate. In Xanthomonas oryzae pv. oryzae (strain MAFF 311018), this protein is Arginine--tRNA ligase.